The following is a 569-amino-acid chain: MVLVTSVRDYINRMLQDISGMKVLILDSETVSNVSIVYSQSELLQKEVFLVEMIDSISVSKESMSHLKAVYFIRPTSDNIQKLRYQLANPRFGEYHLFFSNLLKDTQIHILADSDEQEVVQQVQEYYADFVSGDPYHFTLNMASNHLYMIPAVVDPSGLQRFSDRVVDGIAAVFLALKRRPVIRYQRTSDTAKRIAHETAKLMYQHESALFDFRRTESSPLLLVIDRRDDPVTPLLNQWTYQAMVHELIGLQDNKVDLKSIGSLPKDQQVEVVLSSEQDAFFKSNMYENFGDIGMNIKRMVDDFQQVAKSNQNIQTVEDMARFVDNYPEYKKMQGNVSKHVTLVTEMSKLVEARKLMTVSQTEQDLACNGGQGAAYEAVTDLLNNESVSDIDRLRLVMLYALRYEKENPVQLMQLFNKLASRSPKYKPGLVQFLLKQAGVEKRTGDLFGNRDLLNIARNMARGLKGVENVYTQHQPLLFQTMESITRGRLRDVDYPFVGDHFQQGRPQEVVIFMVGGTTYEESRSVALQNATNSGVRFILGGTAVLNSKRFLKDLEEAQRISRSGSHMV.

Belongs to the STXBP/unc-18/SEC1 family. As to quaternary structure, interacts with both SYP41 or SYP42 and VTI12, but in different domains of the trans-Golgi network. Does not interact on the pervacuolar compartment with VTI11, SYP21 or SYP22, or on the cis-Golgi with SYP31. Interacts at the trans-Golgi network (TGN) with the SYP41/SYP61/VTI12 SNARE complex. Highly expressed in roots, lower expression in leaves, stems and flowers.

The protein resides in the golgi apparatus. It localises to the trans-Golgi network membrane. The protein localises to the early endosome. In terms of biological role, involved in the protein transport to the vacuole, probably at the level of vesicle fusion at the trans-Golgi network (TGN) and not in transport from the TGN to the prevacuolar compartment, by promoting the recycling of vacuolar sorting receptors back to the TGN. Involved in early endosomal vesicle trafficking, particularly at the trans-Golgi-network/early endosome (TGN/EE) thus residing in early endocytic route. Together with BIG5/BEN1 required for polar PIN-FORMED (PIN) proteins localization, for their dynamic repolarization, and consequently for auxin activity gradient formation and auxin-related developmental processes (e.g. embryonic patterning, organogenesis and vasculature venation patterning). Necessary for pollen germination and for cell expansion. Binds syntaxins. The protein is Vacuolar protein sorting-associated protein 45 homolog of Arabidopsis thaliana (Mouse-ear cress).